A 645-amino-acid chain; its full sequence is Bifurcating [FeFe] hydrogenase alpha subunit (645 aa).

One can recognise a 2Fe-2S ferredoxin-type domain in the interval 1-76 (MKIYVDGREV…GMKVKTNTPE (76 aa)). [2Fe-2S] cluster is bound by residues Cys34, Cys45, Cys48, and Cys60. The region spanning 76 to 115 (EIYEMRRNILELILATHNRDCTTCDRNGSCKLQKYAEDFG) is the 4Fe-4S His(Cys)3-ligated-type domain. [4Fe-4S] cluster contacts are provided by His92, Cys96, Cys99, Cys105, Cys143, Cys146, Cys149, Cys153, Cys186, Cys189, Cys192, Cys196, Cys295, Cys350, Cys482, and Cys486. 2 4Fe-4S ferredoxin-type domains span residues 133-164 (SAPV…VIEF) and 178-206 (DTPL…IRND). Cys486 contacts Fe(2+). [2Fe-2S] cluster contacts are provided by Cys575, Cys580, Cys612, and Cys616.

In terms of assembly, heterotrimer composed of HydA (alpha subunit), HydB (beta subunit) and HydC (gamma subunit). Near neutral and acidic pH conditions favor oligomerization of the heterotrimeric holoenzyme. [2Fe-2S] cluster is required as a cofactor. The cofactor is [4Fe-4S] cluster. Fe(2+) serves as cofactor.

The protein localises to the cytoplasm. The enzyme catalyses 2 H2 + 2 oxidized [2Fe-2S]-[ferredoxin] + NAD(+) = 2 reduced [2Fe-2S]-[ferredoxin] + NADH + 3 H(+). Functionally, catalyzes the oxidation of the physiological electron carriers NADH and reduced ferredoxin, coupled to the production of H(2). Acts as a bifurcating [FeFe] hydrogenase, which uses the exergonic oxidation of reduced ferredoxin to drive the unfavorable oxidation of NADH to produce H(2). The alpha subunit contains the catalytic H-cluster. The chain is Bifurcating [FeFe] hydrogenase alpha subunit from Thermotoga maritima (strain ATCC 43589 / DSM 3109 / JCM 10099 / NBRC 100826 / MSB8).